A 359-amino-acid polypeptide reads, in one-letter code: Oxopyrrolidines biosynthesis cluster protein G (359 aa).

The interval 1 to 32 is disordered; that stretch reads MDHLRDSLLSSLPRDSPSIGAMDYARRDREST. A compositionally biased stretch (low complexity) spans 7 to 18; it reads SLLSSLPRDSPS.

In terms of biological role, part of the gene cluster that mediates the biosynthesis of oxopyrrolidines, polyketide-amino acid hybrid compounds with feature structures of tetramic acid. Does not seem to play a role in oxopyrrolidines A and B biosynthesis. The chain is Oxopyrrolidines biosynthesis cluster protein G from Penicillium oxalicum (strain 114-2 / CGMCC 5302) (Penicillium decumbens).